Consider the following 185-residue polypeptide: Protein C2-DOMAIN ABA-RELATED 9 (185 aa).

One can recognise a C2 domain in the interval 1–104; the sequence is MEDKPLGILR…LEAHQMELDF (104 aa). Residues Arg22, Asp23, Asp28, Asp74, Lys75, Asp76, and Asp82 each contribute to the Ca(2+) site.

It belongs to the plant CAR protein family. Binds to PYR/PYL/RCAR abscisic acid intracellular receptors in an ABA-independent manner, both at the plasma membrane and in the nucleus. Interacts with LOT1 in the nuleus; this interaction is repressed by abscisic acid (ABA) and is sensitive to calcium ion Ca(2+), leading to free CAR9 accumulation at the plasma membrane. The cofactor is Ca(2+).

Its subcellular location is the cell membrane. The protein localises to the nucleus. Functionally, stimulates the GTPase/ATPase activities of Obg-like ATPases. Mediates the transient calcium-dependent interaction of PYR/PYL/RCAR abscisic acid (ABA) receptors with the plasma membrane and thus regulates ABA sensitivity. This chain is Protein C2-DOMAIN ABA-RELATED 9, found in Arabidopsis thaliana (Mouse-ear cress).